The following is a 901-amino-acid chain: Nuclear factor of activated T-cells, cytoplasmic 4 (901 aa).

Acidic residues predominate over residues 1 to 11; the sequence is MGAASCEDEEL. 2 disordered regions span residues 1 to 180 and 203 to 361; these read MGAA…SSWS and NEAA…TEDS. Pro residues predominate over residues 61 to 81; the sequence is IPRPPPPRPGMHSPPPRPAPS. Over residues 96-109 the composition is skewed to gly residues; the sequence is GGPGGTAGGTGGGR. Positions 114-119 are calcineurin-binding; sequence PSIRIT. Residues 114 to 123 show a composition bias toward low complexity; it reads PSIRITSISP. Positions 151–165 are enriched in gly residues; it reads GFGGYREAGGQGGGA. The segment covering 166–180 has biased composition (low complexity); sequence FFSPSPGSSSLSSWS. Phosphoserine is present on residues serine 168, serine 170, serine 213, and serine 217. Residues 213 to 229 form an SP 1 repeat; sequence SPLPSPRASPRPWTPED. The 2 approximate SP repeats stretch occupies residues 213–293; the sequence is SPLPSPRASP…LSRRGSLGEE (81 aa). Pro residues-rich tracts occupy residues 215-227 and 254-263; these read LPSPRASPRPWTP and GPIPASPRPA. The Nuclear localization signal signature appears at 268-270; sequence KRR. The span at 272–288 shows a compositional bias: low complexity; that stretch reads SSSGTPSSASPALSRRG. One copy of the SP 2; approximate repeat lies at 277 to 293; sequence PSSASPALSRRGSLGEE. Phosphoserine is present on residues serine 289, serine 334, and serine 344. Residues 401-582 enclose the RHD domain; that stretch reads SALPPLDWPL…VPIECSQRSA (182 aa). A DNA-binding region spans residues 430–437; sequence RAHYETEG. An IPT/TIG domain is found at 586-683; that stretch reads PQVEAYSPSA…KRSPTQSFKF (98 aa). The short motif at 672–674 is the Nuclear localization signal element; that stretch reads RRK. Lysine 689 is covalently cross-linked (Glycyl lysine isopeptide (Lys-Gly) (interchain with G-Cter in SUMO2)). Disordered regions lie at residues 697 to 721 and 791 to 868; these read SLRGFPSTSGPPFGPDMDFSPPRPP and QYGG…GFRD. The span at 805 to 822 shows a compositional bias: pro residues; that stretch reads FSPPAPFRPPLPSSPPLE.

In terms of assembly, member of the multicomponent NFATC transcription complex that consists of at least two components, a pre-existing cytoplasmic component NFATC2 and an inducible nuclear component NFATC1. Other NFAT proteins, such as NFATC4, NFATC3, or members of the activating protein-1 (AP-1) family and MAF can also bind the complex. NFAT proteins can bind DNA as monomers or dimers. Component of a promoter-binding complex composed of STAT3, NFATC3 and NFATC4; complex formation is enhanced by calcineurin. Interacts with CREBBP; this interaction potentiates transcription activation. Interacts with MAPK8/JNK1 and MAPK9/JNK2. Interacts with GATA4 (via the second Zn finger). Interacts (via N-terminus) with IRAK1 (via C-terminus). Interacts with RPS6KA3. Interacts with HOMER1, HOMER2 and HOMER3; this interaction competes with calcineurin/PPP3CA-binding and hence prevents NFATC4 dephosphorylation and activation. Interacts with ESR1 and ESR2; this interaction decreases NFATC4 transcriptional activity. Interacts with MTOR and MAPK7/ERK5. Interacts with TRIM17; this interaction prevents NFATC3 nuclear localization. Interacts with TCF25 (via C-terminus); the interaction leads to suppression of NFATC4 transcription factor activity and is reduced following stimulation with angiotensin-2. Post-translationally, phosphorylated by NFATC-kinases; dephosphorylated by calcineurin/PPP3CA. Phosphorylated on Ser-168 and Ser-170 by MTOR, IRAK1, MAPK7/ERK5 and MAPK14/p38, on Ser-213 and Ser-217 by MAPK8 and MAPK9, and on Ser-289 and Ser-344 by RPS6KA3. Phosphorylated by GSK3B; this phosphorylation markedly increases NFATC4 ubiquitination. Phosphorylation by MAPK8/JNK1, MAPK9/JNK2 and RPS6KA3 may stimulate NFATC4 transcriptional activity. Phosphorylation at Ser-168 and Ser-170 is stimulated by UV irradiation. Ubiquitinated, leading to degradation by the proteasome. Ubiquitination may be stimulated by GSK3B-dependent phosphorylation. Polyubiquitin linkage mainly occurs through 'Lys-48'. In terms of tissue distribution, expressed in heart (at protein level).

Its subcellular location is the cytoplasm. The protein resides in the nucleus. Ca(2+)-regulated transcription factor that is involved in several processes, including the development and function of the immune, cardiovascular, musculoskeletal, and nervous systems. Involved in T-cell activation, stimulating the transcription of cytokine genes, including that of IL2 and IL4. Along with NFATC3, involved in embryonic heart development. Following JAK/STAT signaling activation and as part of a complex with NFATC3 and STAT3, binds to the alpha-beta E4 promoter region of CRYAB and activates transcription in cardiomyocytes. Involved in mitochondrial energy metabolism required for cardiac morphogenesis and function. Transactivates many genes involved in heart physiology. Along with GATA4, binds to and activates NPPB/BNP promoter. Activates NPPA/ANP/ANF and MYH7/beta-MHC transcription. Binds to and transactivates AGTR2 gene promoter. Involved in the regulation of adult hippocampal neurogenesis. Involved in BDNF-driven pro-survival signaling in hippocampal adult-born neurons. Involved in the formation of long-term spatial memory and long-term potentiation. In cochlear nucleus neurons, may play a role in deafferentation-induced apoptosis during a developmental critical period when auditory neurons depend on afferent input for survival. Binds to and activates the BACE1/Beta-secretase 1 promoter, hence may regulate the proteolytic processing of the amyloid precursor protein (APP). Plays a role in adipocyte differentiation. May be involved in myoblast differentiation into myotubes. Binds the consensus DNA sequence 5'-GGAAAAT-3'. In the presence of CREBBP, activates TNF transcription. Binds to PPARG gene promoter and regulates its activity. Binds to PPARG and REG3G gene promoters. The polypeptide is Nuclear factor of activated T-cells, cytoplasmic 4 (Nfatc4) (Rattus norvegicus (Rat)).